Reading from the N-terminus, the 320-residue chain is Ferrochelatase (320 aa).

H194 and E275 together coordinate Fe cation.

This sequence belongs to the ferrochelatase family.

Its subcellular location is the cytoplasm. It catalyses the reaction heme b + 2 H(+) = protoporphyrin IX + Fe(2+). The protein operates within porphyrin-containing compound metabolism; protoheme biosynthesis; protoheme from protoporphyrin-IX: step 1/1. Functionally, catalyzes the ferrous insertion into protoporphyrin IX. This Vibrio atlanticus (strain LGP32) (Vibrio splendidus (strain Mel32)) protein is Ferrochelatase.